The following is a 233-amino-acid chain: Antiholin-like protein LrgB (233 aa).

A run of 6 helical transmembrane segments spans residues 5–25 (LGIN…VIAT), 33–53 (GFFL…FLKL), 63–83 (IGGD…AIPL), 97–117 (IFGG…LVAI), 152–172 (LTSL…AKIV), and 212–232 (IAVV…APIL).

The protein belongs to the CidB/LrgB family. LrgB subfamily.

The protein localises to the cell membrane. In terms of biological role, inhibits the expression or activity of extracellular murein hydrolases by interacting, possibly with LrgA, with the holin-like proteins CidA and/or CidB. The LrgAB and CidAB proteins may affect the proton motive force of the membrane. May be involved in programmed cell death (PCD), possibly triggering PCD in response to antibiotics and environmental stresses. The polypeptide is Antiholin-like protein LrgB (Staphylococcus epidermidis (strain ATCC 35984 / DSM 28319 / BCRC 17069 / CCUG 31568 / BM 3577 / RP62A)).